Here is a 37-residue protein sequence, read N- to C-terminus: Large ribosomal subunit protein bL36 (37 aa).

It belongs to the bacterial ribosomal protein bL36 family.

This Nitratidesulfovibrio vulgaris (strain DSM 19637 / Miyazaki F) (Desulfovibrio vulgaris) protein is Large ribosomal subunit protein bL36.